Consider the following 131-residue polypeptide: EFKEAFSLFDKDGDGTITTKELGTVMRSLGQNPTEAELQDMINEVDADGNGTIDFPEFLTMMARKMKDTDSEEEIREAFRVFDKDSNGYISAAELRHVMTNLGEKLTDEEVDEMIREADIDGDGQVNYEEF.

EF-hand domains follow at residues 1–32 (EFKE…LGQN), 33–68 (PTEA…KMKD), 70–105 (DSEE…LGEK), and 106–131 (LTDE…YEEF). Residues D10, D12, D14, T16, E21, D46, D48, N50, T52, E57, D83, D85, N87, Y89, E94, D119, D121, D123, Q125, and E130 each contribute to the Ca(2+) site.

Belongs to the calmodulin family.

In Gallus gallus (Chicken), this protein is Neo-calmodulin.